The following is a 472-amino-acid chain: Phosphoenolpyruvate carboxykinase (ATP), glycosomal (472 aa).

Residue 221–228 (GLSGTGKT) participates in ATP binding.

Belongs to the phosphoenolpyruvate carboxykinase (ATP) family. Homodimer.

Its subcellular location is the glycosome. It carries out the reaction oxaloacetate + ATP = phosphoenolpyruvate + ADP + CO2. Its pathway is carbohydrate biosynthesis; gluconeogenesis. Its function is as follows. P60 has the capability to bind to microtubules and membrane vesicles in vitro. The protein is Phosphoenolpyruvate carboxykinase (ATP), glycosomal of Trypanosoma brucei brucei.